A 358-amino-acid chain; its full sequence is Ferredoxin--NADP reductase (358 aa).

FAD-binding residues include Asp-38, Gln-46, Tyr-51, Val-91, Phe-126, Asp-301, and Thr-341.

It belongs to the ferredoxin--NADP reductase type 2 family. In terms of assembly, homodimer. Requires FAD as cofactor.

The enzyme catalyses 2 reduced [2Fe-2S]-[ferredoxin] + NADP(+) + H(+) = 2 oxidized [2Fe-2S]-[ferredoxin] + NADPH. The polypeptide is Ferredoxin--NADP reductase (Paracidovorax citrulli (strain AAC00-1) (Acidovorax citrulli)).